We begin with the raw amino-acid sequence, 186 residues long: Quinone reductase (186 aa).

Residues 13–20 (SLRKESYN), 80–83 (EYNR), and serine 116 contribute to the FMN site.

It belongs to the SsuE family. As to quaternary structure, homotetramer. Dimer of dimers. The tetrameric configuration has a central role in chromate reductase activity. FMN is required as a cofactor.

The enzyme catalyses a quinone + NADH + H(+) = a quinol + NAD(+). The catalysed reaction is a quinone + NADPH + H(+) = a quinol + NADP(+). It carries out the reaction Cr(6+) + 2 NADH + O2 = Cr(3+) + superoxide + 2 NAD(+) + 2 H(+). It catalyses the reaction Cr(6+) + 2 NADPH + O2 = Cr(3+) + superoxide + 2 NADP(+) + 2 H(+). With respect to regulation, may be inhibited by divalent cations. In terms of biological role, catalyzes the reduction of quinones. Acts by simultaneous two-electron transfer, avoiding formation of highly reactive semiquinone intermediates and producing quinols that promote tolerance of H(2)O(2). Quinone reduction is probably the primary biological role of ChrR. Can also reduce toxic chromate to insoluble and less toxic Cr(3+). Catalyzes the transfer of three electrons to Cr(6+) producing Cr(3+) and one electron to molecular oxygen. This reaction produces transiently a minimal amount of the toxic Cr(5+) species and reactive oxygen species (ROS). Chromate reduction protects the cell against chromate toxicity, but is likely a secondary activity. Can also reduce potassium ferricyanide and 2,6-dichloroindophenol. During chromate reduction, displays an eightfold preference for NADH over NADPH. This chain is Quinone reductase, found in Pseudomonas putida (strain ATCC 47054 / DSM 6125 / CFBP 8728 / NCIMB 11950 / KT2440).